A 137-amino-acid chain; its full sequence is Basic phospholipase A2 homolog bothropstoxin-I (137 aa).

A signal peptide spans 1-16 (MRTLWIMAVLLVGVEG). Intrachain disulfides connect C42–C131, C44–C60, C59–C111, C65–C137, C66–C104, C73–C97, and C91–C102. The segment at 121–133 (KKYRYHLKPFCKK) is important for membrane-damaging activities in eukaryotes and bacteria; heparin-binding.

It belongs to the phospholipase A2 family. Group II subfamily. K49 sub-subfamily. Homodimer; non-covalently linked (probable alternative/compact dimer conformation in solution). Binds to heparin. In terms of tissue distribution, expressed by the venom gland.

Its subcellular location is the secreted. Suramin inhibits both myotoxic and muscle-paralyzing activities. Chicoric acid inhibits myotoxic activity. Zinc ions inhibits the myotoxic activity and the neuromuscular blockade. Heparin inhibits myotoxic activity. Snake venom phospholipase A2 homolog that lacks enzymatic activity. Shows local myotoxic activity. Induces inflammation, since it induces edema and leukocytes infiltration. In addition, it induces NLRP3 NLRP3, ASC (PYCARD), caspase-1 (CASP1), and IL-1beta (IL1B) gene expression in the gastrocnemius muscle, showing that it is able to activate NLRP3 inflammasome. It also damages artificial and myoblast membranes by a calcium-independent mechanism, has bactericidal activity, and induces neuromuscular blockade. A model of myotoxic mechanism has been proposed: an apo Lys49-PLA2 is activated by the entrance of a hydrophobic molecule (e.g. fatty acid) at the hydrophobic channel of the protein leading to a reorientation of a monomer. This reorientation causes a transition between 'inactive' to 'active' states, causing alignment of C-terminal and membrane-docking sites (MDoS) side-by-side and putting the membrane-disruption sites (MDiS) in the same plane, exposed to solvent and in a symmetric position for both monomers. The MDoS region stabilizes the toxin on membrane by the interaction of charged residues with phospholipid head groups. Subsequently, the MDiS region destabilizes the membrane with penetration of hydrophobic residues. This insertion causes a disorganization of the membrane, allowing an uncontrolled influx of ions (i.e. calcium and sodium), and eventually triggering irreversible intracellular alterations and cell death. The protein is Basic phospholipase A2 homolog bothropstoxin-I of Bothrops jararacussu (Jararacussu).